The primary structure comprises 423 residues: Polyglutamylase complex subunit TTLL1 (423 aa).

One can recognise a TTL domain in the interval 1–367 (MAGRVKWVTD…NGEIPDCKWN (367 aa)). ATP contacts are provided by residues lysine 138, 144-145 (QG), 181-184 (SLYI), and 194-196 (KFD). Position 144 (glutamine 144) interacts with a protein. Arginine 220 is a binding site for L-glutamate. ATP is bound at residue 241–242 (TN). Lysine 259 provides a ligand contact to L-glutamate. Mg(2+) is bound by residues aspartate 313, glutamate 326, and asparagine 328. Lysine 344 is an L-glutamate binding site. Residues 390–423 (DGAERELRSRPGQPVGPRTGRSRDSGRNVLTTWK) form a disordered region.

This sequence belongs to the tubulin polyglutamylase family. In terms of assembly, part of the neuronal tubulin polyglutamylase complex which contains TPGS1, TPGS2, TTLL1, LRRC49 and NICN1. Interacts with PCM1, CSTPP1 and LRRC49. The cofactor is Mg(2+).

It is found in the cytoplasm. The protein localises to the cytoskeleton. The protein resides in the cilium basal body. It localises to the cilium axoneme. Its subcellular location is the cell projection. It is found in the cilium. The protein localises to the flagellum. It catalyses the reaction (L-glutamyl)(n)-gamma-L-glutamyl-L-glutamyl-[protein] + L-glutamate + ATP = (L-glutamyl)(n+1)-gamma-L-glutamyl-L-glutamyl-[protein] + ADP + phosphate + H(+). In terms of biological role, catalytic subunit of a polyglutamylase complex which modifies tubulin, generating side chains of glutamate on the gamma-carboxyl group of specific glutamate residues within the C-terminal tail of tubulin. Probably involved in the side-chain elongation step of the polyglutamylation reaction rather than the initiation step. Modifies both alpha- and beta-tubulins with a preference for the alpha-tail. Unlike most polyglutamylases of the tubulin--tyrosine ligase family, only displays a catalytic activity when in complex with other proteins as it is most likely lacking domains important for autonomous activity. Part of the neuronal tubulin polyglutamylase complex. Mediates cilia and flagella polyglutamylation which is essential for their biogenesis and motility. Involved in respiratory motile cilia function through the regulation of beating asymmetry. Essential for sperm flagella biogenesis, motility and male fertility. Involved in KLF4 glutamylation which impedes its ubiquitination, thereby leading to somatic cell reprogramming, pluripotency maintenance and embryogenesis. The sequence is that of Polyglutamylase complex subunit TTLL1 (Ttll1) from Rattus norvegicus (Rat).